The primary structure comprises 197 residues: Imidazoleglycerol-phosphate dehydratase (197 aa).

It belongs to the imidazoleglycerol-phosphate dehydratase family.

Its subcellular location is the cytoplasm. It carries out the reaction D-erythro-1-(imidazol-4-yl)glycerol 3-phosphate = 3-(imidazol-4-yl)-2-oxopropyl phosphate + H2O. Its pathway is amino-acid biosynthesis; L-histidine biosynthesis; L-histidine from 5-phospho-alpha-D-ribose 1-diphosphate: step 6/9. The polypeptide is Imidazoleglycerol-phosphate dehydratase (Azotobacter vinelandii (strain DJ / ATCC BAA-1303)).